The chain runs to 533 residues: Probable ribonuclease ZC3H12D (533 aa).

In terms of domain architecture, RNase NYN spans leucine 92–serine 246. The C3H1-type zinc finger occupies lysine 251–arginine 282. The interval histidine 262–glycine 368 is necessary for interaction with ZC3H12A. Residues leucine 302 to proline 335 are disordered.

This sequence belongs to the ZC3H12 family. As to quaternary structure, interacts with ZC3H12A. Mg(2+) is required as a cofactor. As to expression, expressed at low levels in bone marrow derived macrophages.

It localises to the cytoplasm. It is found in the P-body. May regulate cell growth likely by suppressing RB1 phosphorylation. May function as RNase and regulate the levels of target RNA species (Potential). In association with ZC3H12A enhances the degradation of interleukin IL-6 mRNA level in activated macrophages. Serve as a tumor suppressor in certain leukemia cells. Overexpression inhibits the G1 to S phase progression through suppression of RB1 phosphorylation. The chain is Probable ribonuclease ZC3H12D from Mus musculus (Mouse).